Consider the following 309-residue polypeptide: Elongation factor Ts (309 aa).

The involved in Mg(2+) ion dislocation from EF-Tu stretch occupies residues 82–85; the sequence is TDFV.

The protein belongs to the EF-Ts family.

Its subcellular location is the cytoplasm. Associates with the EF-Tu.GDP complex and induces the exchange of GDP to GTP. It remains bound to the aminoacyl-tRNA.EF-Tu.GTP complex up to the GTP hydrolysis stage on the ribosome. The chain is Elongation factor Ts from Rickettsia peacockii (strain Rustic).